Here is a 76-residue protein sequence, read N- to C-terminus: Zinc finger protein 706 (76 aa).

Low complexity predominate over residues 1 to 13; sequence MARGQQKIQSQQK. 2 disordered regions span residues 1 to 32 and 53 to 76; these read MARGQQKIQSQQKNAKKQAEQKKKQGHDQKAA and TFKQHFESKHPKTPLPPELADVQA. Composition is skewed to basic and acidic residues over residues 17–31 and 53–62; these read KQAEQKKKQGHDQKA and TFKQHFESKH. The segment at 39-62 adopts a C2H2-type zinc-finger fold; it reads YTCTVCRTQMPDPKTFKQHFESKH.

The protein localises to the cytoplasm. The protein resides in the nucleus. Transcription repressor involved in the exit of embryonic stem cells (ESCs) from self-renewal. This Gallus gallus (Chicken) protein is Zinc finger protein 706.